A 528-amino-acid polypeptide reads, in one-letter code: Na(+)/H(+) antiporter NhaB (528 aa).

Helical transmembrane passes span 10 to 30 (IGNF…SFLI), 63 to 83 (YPLQ…MTSA), 96 to 116 (VLLL…LLLF), 131 to 165 (VSLM…FYAI), 204 to 224 (LLMH…VGEP), 240 to 260 (FVIR…LTCL), 305 to 325 (VLVG…VGLV), 359 to 379 (LAVF…APVI), 391 to 411 (LVIF…VFVG), 449 to 469 (ATPN…APLI), and 476 to 496 (MVWM…LAIE).

Belongs to the NhaB Na(+)/H(+) (TC 2.A.34) antiporter family.

It is found in the cell inner membrane. It carries out the reaction 2 Na(+)(in) + 3 H(+)(out) = 2 Na(+)(out) + 3 H(+)(in). Functionally, na(+)/H(+) antiporter that extrudes sodium in exchange for external protons. This Shewanella putrefaciens (strain CN-32 / ATCC BAA-453) protein is Na(+)/H(+) antiporter NhaB.